The following is a 575-amino-acid chain: Sodium/hydrogen exchanger 8 (575 aa).

11 helical membrane passes run 54 to 74 (MTIFFSLLVLAICIILVHLLI), 78 to 98 (LHFLPESVAVVSLGILMGAVI), 117 to 137 (PNMFFLLLLPPIIFESGYSLH), 150 to 170 (LFAVFGTAISAFVVGGGIYFL), 185 to 205 (FAFGSLISAVDPVATIAIFNA), 255 to 275 (LGYFLKMFFGSAALGTLTGLI), 305 to 325 (GLAEGISLSGIMAILFSGIVM), 348 to 368 (VAFLCETCVFAFLGLSIFSFP), 373 to 393 (ISFVIWCIVLVLFGRAVNIFP), 411 to 431 (MFIMWFSGLRGAIPYALSLHL), and 445 to 465 (TTIIIVLFTILLLGGSTMPLI). Thr504 carries the phosphothreonine modification. Ser565 and Ser567 each carry phosphoserine.

Belongs to the monovalent cation:proton antiporter 1 (CPA1) transporter (TC 2.A.36) family. As to expression, intestine and kidneys.

The protein localises to the golgi apparatus membrane. Its subcellular location is the golgi apparatus. It is found in the trans-Golgi network membrane. It localises to the endosome. The protein resides in the multivesicular body membrane. The protein localises to the apical cell membrane. Its subcellular location is the cytoplasmic vesicle. It is found in the secretory vesicle. It localises to the acrosome. It catalyses the reaction Na(+)(in) + H(+)(out) = Na(+)(out) + H(+)(in). With respect to regulation, expression and activity are regulated by acid media by increasing the rate of trafficking to the apical membrane. Inhibited by HOE694 and S3226. In terms of biological role, na(+)/H(+) antiporter. Mediates the electoneutral exchange of intracellular H(+) ions for extracellular Na(+) in 1:1 stoichiometry. Acts as an Na(+)/H(+) exchanger in the trans-Golgi. Contributes to the regulation of pH regulation of Golgi apparatus, and consequently, in protein trafficking and endosomal morphology. In germ cells, plays a crucial role in acrosome biogenesis and sperm development, probably by playing a role in the fusion of the Golgi-derived vesicles that form the acrosomal cap. Can also be active at the cell surface of specialized cells. In the small intestine, at the cell membrane, plays a major physiological role in transepithelial absorption of Na(+) and regulates intracellular pH homeostasis of intestinal epithelial cells. Acts as an important regulator of mucosal integrity in the intestine and in the stomach, could mediate the pH fluctuation necessary for mucin exocytosis or assist membrane trafficking of other proteins. Plays a role in photoreceptor survival and in the maintenance of intracellular pH homeostasis in retinal pigment epithelium (RPE cells). This chain is Sodium/hydrogen exchanger 8 (Slc9a8), found in Rattus norvegicus (Rat).